The primary structure comprises 283 residues: Urease accessory protein UreD (283 aa).

Residues methionine 1–glycine 21 are disordered.

Belongs to the UreD family. UreD, UreF and UreG form a complex that acts as a GTP-hydrolysis-dependent molecular chaperone, activating the urease apoprotein by helping to assemble the nickel containing metallocenter of UreC. The UreE protein probably delivers the nickel.

Its subcellular location is the cytoplasm. Its function is as follows. Probably acts in the maturation of urease via the functional incorporation of the urease nickel metallocenter. Required for urease expression. This Corynebacterium glutamicum (strain ATCC 13032 / DSM 20300 / JCM 1318 / BCRC 11384 / CCUG 27702 / LMG 3730 / NBRC 12168 / NCIMB 10025 / NRRL B-2784 / 534) protein is Urease accessory protein UreD.